The following is a 360-amino-acid chain: U7 snRNA-associated Sm-like protein LSm11 (360 aa).

The interval 1–29 (MEERERGARSAGAGSPARPPSPRLDVSSD) is disordered. A phosphoserine mark is found at Ser15 and Ser21. An Omega-N-methylarginine modification is found at Arg41. A disordered region spans residues 68 to 143 (RGGGRGRGRA…PGRSRKAPRN (76 aa)). Residues 78 to 94 (RGAAAGSGVPAAPGPSG) show a composition bias toward low complexity. A Glycyl lysine isopeptide (Lys-Gly) (interchain with G-Cter in SUMO2) cross-link involves residue Lys120. Ser154 bears the Phosphoserine mark. The Sm domain occupies 154-229 (SPLGELHRCI…LTLTRLFDRL (76 aa)). The segment at 171-204 (VHIRTFKGLRGVCTGFLVAFDKFWNMALTDVDET) is SM 1. Positions 268–333 (ADTGRGSHKR…SRKKKRKPKV (66 aa)) are disordered. Ser280 carries the post-translational modification Phosphoserine. The segment covering 299 to 322 (GRTTRTDGSSVGGTFSRATTLSRG) has biased composition (polar residues). The SM 2 stretch occupies residues 343 to 356 (INQIFIRGENVLLV).

Belongs to the snRNP Sm proteins family. In terms of assembly, component of the heptameric ring U7 snRNP complex, or U7 Sm protein core complex, at least composed of LSM10, LSM11, SNRPB, SNRPD3, SNRPE, SNRPF, SNRPG and U7 snRNA. Formation of the U7 snRNP is an ATP-dependent process mediated by a specialized SMN complex containing at least the Sm protein core complex and additionally, the U7-specific LSM10 and LSM11 proteins. Identified in a histone pre-mRNA complex, at least composed of ERI1, LSM11, SLBP, SNRPB, SYNCRIP and YBX1. Interacts (via the Sm domains) with CLNS1A. Interacts with SMN and ZNF473. Interacts with PRMT5 and WDR77.

The protein localises to the nucleus. Its function is as follows. Component of the U7 snRNP complex that is involved in the histone 3'-end pre-mRNA processing. Increases U7 snRNA levels but not histone 3'-end pre-mRNA processing activity, when overexpressed. Required for cell cycle progression from G1 to S phases. Binds specifically to the Sm-binding site of U7 snRNA. The sequence is that of U7 snRNA-associated Sm-like protein LSm11 from Homo sapiens (Human).